The primary structure comprises 240 residues: Orotidine 5'-phosphate decarboxylase (240 aa).

Substrate contacts are provided by residues D15, K37, D64–T73, T125, R186, Q195, G215, and R216. K66 acts as the Proton donor in catalysis.

It belongs to the OMP decarboxylase family. Type 1 subfamily. As to quaternary structure, homodimer.

The catalysed reaction is orotidine 5'-phosphate + H(+) = UMP + CO2. The protein operates within pyrimidine metabolism; UMP biosynthesis via de novo pathway; UMP from orotate: step 2/2. Catalyzes the decarboxylation of orotidine 5'-monophosphate (OMP) to uridine 5'-monophosphate (UMP). This Pelobacter propionicus (strain DSM 2379 / NBRC 103807 / OttBd1) protein is Orotidine 5'-phosphate decarboxylase.